A 494-amino-acid polypeptide reads, in one-letter code: Splicing regulatory glutamine/lysine-rich protein 1 (494 aa).

An RRM domain is found at 69-145 (RTVYVGNLNS…RPLKINHSNN (77 aa)). Phosphoserine is present on residues serine 174 and serine 187. Residues 176-494 (ISAAIEPESG…ERLCSTADAV (319 aa)) are disordered. The span at 183–192 (ESGKSNERKG) shows a compositional bias: basic and acidic residues. 2 stretches are compositionally biased toward basic residues: residues 193–230 (GRSRSHTRSKSRSSSKSHSRRKRSQSKHRSRSHNRSRS) and 238–262 (SKSPHKKRSKSRERRKSRSRSRSRD). A compositionally biased stretch (basic and acidic residues) spans 263-340 (KRKDTREKVK…DRSKEADEKR (78 aa)). A Phosphothreonine modification is found at threonine 348. Basic residues predominate over residues 357-373 (RRSRSASRERRRRRSRS). Basic and acidic residues-rich tracts occupy residues 404-453 (REKE…KEAD) and 463-474 (KDTARTEEESKA).

This sequence belongs to the splicing factor SR family. As to quaternary structure, interacts with SREK1IP1. Homodimer. Binds SFRS1, SFRS2, SFRS3 and SFRS6. Interacts with the spliceosome. As to expression, ubiquitous. Detected in liver, brain, lung, spleen, testis and pancreas.

The protein resides in the nucleus. Its function is as follows. Participates in the regulation of alternative splicing by modulating the activity of other splice facors. Inhibits the splicing activity of SFRS1, SFRS2 and SFRS6. Augments the splicing activity of SFRS3. This Rattus norvegicus (Rat) protein is Splicing regulatory glutamine/lysine-rich protein 1 (Srek1).